A 173-amino-acid polypeptide reads, in one-letter code: Translocon-associated protein subunit delta (173 aa).

The first 23 residues, 1 to 23, serve as a signal peptide directing secretion; that stretch reads MAAMASFGALALLLLSGLSCCSA. At 24–144 the chain is on the lumenal side; sequence EACLEPQITP…SVDHRGTWNG (121 aa). Cys26 and Cys57 are oxidised to a cystine. Residue Lys73 forms a Glycyl lysine isopeptide (Lys-Gly) (interchain with G-Cter in ubiquitin) linkage. The chain crosses the membrane as a helical span at residues 145 to 165; sequence PWVSTEVLAAAIGIVIYYLAF. Residues 166–173 lie on the Cytoplasmic side of the membrane; the sequence is SAKSHIQA.

It belongs to the TRAP-delta family. In terms of assembly, heterotetramer of TRAP-alpha, TRAP-beta, TRAP-delta and TRAP-gamma.

The protein localises to the endoplasmic reticulum membrane. Its function is as follows. TRAP proteins are part of a complex whose function is to bind calcium to the ER membrane and thereby regulate the retention of ER resident proteins. The sequence is that of Translocon-associated protein subunit delta (Ssr4) from Rattus norvegicus (Rat).